Consider the following 257-residue polypeptide: Pimeloyl-[acyl-carrier protein] methyl ester esterase (257 aa).

The region spanning 16–240 is the AB hydrolase-1 domain; sequence LVLIHGWGMN…EQASHAPFIS (225 aa). Substrate is bound by residues W22, 82–83, and 143–147; these read SL and FMALQ. The active-site Nucleophile is S82. Catalysis depends on residues D207 and H235. Residue H235 coordinates substrate.

Belongs to the AB hydrolase superfamily. Carboxylesterase BioH family. In terms of assembly, monomer.

It is found in the cytoplasm. It carries out the reaction 6-carboxyhexanoyl-[ACP] methyl ester + H2O = 6-carboxyhexanoyl-[ACP] + methanol + H(+). It functions in the pathway cofactor biosynthesis; biotin biosynthesis. In terms of biological role, the physiological role of BioH is to remove the methyl group introduced by BioC when the pimeloyl moiety is complete. It allows to synthesize pimeloyl-ACP via the fatty acid synthetic pathway through the hydrolysis of the ester bonds of pimeloyl-ACP esters. In Aliivibrio fischeri (strain ATCC 700601 / ES114) (Vibrio fischeri), this protein is Pimeloyl-[acyl-carrier protein] methyl ester esterase.